A 516-amino-acid chain; its full sequence is uncharacterized protein (516 aa).

The interval 1-35 (MAERTSESSSESASFDLEKQQSNHHDRYQSSVSSE) is disordered. The span at 16–28 (DLEKQQSNHHDRY) shows a compositional bias: basic and acidic residues. Serine 31 bears the Phosphoserine mark. 12 consecutive transmembrane segments (helical) span residues 77-97 (VAVM…FSGA), 111-131 (VALL…VVWA), 143-163 (MIIA…AKDI), 166-186 (VMIC…TVAG), 198-218 (GLVI…SPIV), 231-251 (WTSY…IIFH), 301-321 (LLIF…VYGI), 345-365 (SLPY…VALF), 386-406 (LPSM…LAWT), 412-432 (IHWI…ITIF), 439-461 (IIDC…RSSF), and 481-501 (AGSL…MLFL).

The protein belongs to the major facilitator superfamily.

It is found in the membrane. This is an uncharacterized protein from Schizosaccharomyces pombe (strain 972 / ATCC 24843) (Fission yeast).